Reading from the N-terminus, the 322-residue chain is 4-hydroxythreonine-4-phosphate dehydrogenase (322 aa).

2 residues coordinate substrate: H131 and T132. H161, H206, and H259 together coordinate a divalent metal cation. Positions 267, 276, and 285 each coordinate substrate.

Belongs to the PdxA family. As to quaternary structure, homodimer. It depends on a divalent metal cation as a cofactor.

The protein resides in the cytoplasm. The catalysed reaction is 4-(phosphooxy)-L-threonine + NAD(+) = 3-amino-2-oxopropyl phosphate + CO2 + NADH. It functions in the pathway cofactor biosynthesis; pyridoxine 5'-phosphate biosynthesis; pyridoxine 5'-phosphate from D-erythrose 4-phosphate: step 4/5. Catalyzes the NAD(P)-dependent oxidation of 4-(phosphooxy)-L-threonine (HTP) into 2-amino-3-oxo-4-(phosphooxy)butyric acid which spontaneously decarboxylates to form 3-amino-2-oxopropyl phosphate (AHAP). In Sulfurihydrogenibium sp. (strain YO3AOP1), this protein is 4-hydroxythreonine-4-phosphate dehydrogenase.